Reading from the N-terminus, the 290-residue chain is ATP synthase gamma chain (290 aa).

Belongs to the ATPase gamma chain family. In terms of assembly, F-type ATPases have 2 components, CF(1) - the catalytic core - and CF(0) - the membrane proton channel. CF(1) has five subunits: alpha(3), beta(3), gamma(1), delta(1), epsilon(1). CF(0) has three main subunits: a, b and c.

The protein resides in the cell inner membrane. In terms of biological role, produces ATP from ADP in the presence of a proton gradient across the membrane. The gamma chain is believed to be important in regulating ATPase activity and the flow of protons through the CF(0) complex. The sequence is that of ATP synthase gamma chain from Amoebophilus asiaticus (strain 5a2).